The primary structure comprises 63 residues: Large ribosomal subunit protein uL30 (63 aa).

This sequence belongs to the universal ribosomal protein uL30 family. In terms of assembly, part of the 50S ribosomal subunit.

In Xanthomonas axonopodis pv. citri (strain 306), this protein is Large ribosomal subunit protein uL30.